The primary structure comprises 129 residues: Small ribosomal subunit protein uS8my (129 aa).

The protein belongs to the universal ribosomal protein uS8 family. As to quaternary structure, component of the mitochondrial ribosome small subunit.

The protein localises to the mitochondrion. In Arabidopsis thaliana (Mouse-ear cress), this protein is Small ribosomal subunit protein uS8my (RPS15AE).